We begin with the raw amino-acid sequence, 268 residues long: Calpain small subunit 1 (268 aa).

An N-acetylmethionine modification is found at methionine 1. Serine 6 is modified (phosphoserine). Positions 96–130 (EEVRQFRKLFVQLAGDDMEVSATELMNILNKVVTR) constitute an EF-hand 1; atypical domain. Alanine 109, aspartate 112, glutamate 114, glutamate 119, aspartate 137, aspartate 152, aspartate 154, threonine 156, lysine 158, and glutamate 163 together coordinate Ca(2+). 4 consecutive EF-hand domains span residues 139–172 (FGID…NNIK), 169–204 (NNIK…AGFH), 205–233 (LNEH…ISCL), and 234–268 (VRLD…TMYS). Residue lysine 179 is modified to N6-acetyllysine. Ca(2+) is bound by residues aspartate 182, aspartate 184, serine 186, threonine 188, glutamate 193, and aspartate 225.

Homodimer or heterodimer of a large (catalytic) and a small (regulatory) subunit. In presence of calcium, the heterodimer dissociates.

It localises to the cytoplasm. The protein localises to the cell membrane. Regulatory subunit of the calcium-regulated non-lysosomal thiol-protease which catalyzes limited proteolysis of substrates involved in cytoskeletal remodeling and signal transduction. Essential for embryonic development. The sequence is that of Calpain small subunit 1 (Capns1) from Mus musculus (Mouse).